A 347-amino-acid polypeptide reads, in one-letter code: Spermidine/putrescine import ATP-binding protein PotA (347 aa).

The ABC transporter domain occupies 6-238 (LEIKNLSHYY…PKTKFVADFI (233 aa)). Residue 40-47 (GPSGCGKT) coordinates ATP.

It belongs to the ABC transporter superfamily. Spermidine/putrescine importer (TC 3.A.1.11.1) family. The complex is composed of two ATP-binding proteins (PotA), two transmembrane proteins (PotB and PotC) and a solute-binding protein (PotD).

Its subcellular location is the cell inner membrane. The enzyme catalyses ATP + H2O + polyamine-[polyamine-binding protein]Side 1 = ADP + phosphate + polyamineSide 2 + [polyamine-binding protein]Side 1.. Functionally, part of the ABC transporter complex PotABCD involved in spermidine/putrescine import. Responsible for energy coupling to the transport system. The protein is Spermidine/putrescine import ATP-binding protein PotA of Borreliella afzelii (strain PKo) (Borrelia afzelii).